The chain runs to 896 residues: Isoleucine--tRNA ligase (896 aa).

The 'HIGH' region motif lies at 57-67 (PYANNNIHIGH). Residue Glu543 participates in L-isoleucyl-5'-AMP binding. The short motif at 584 to 588 (KMSKS) is the 'KMSKS' region element. Lys587 serves as a coordination point for ATP. Positions 869, 872, 885, and 888 each coordinate Zn(2+).

It belongs to the class-I aminoacyl-tRNA synthetase family. IleS type 1 subfamily. As to quaternary structure, monomer. Zn(2+) serves as cofactor.

The protein resides in the cytoplasm. The enzyme catalyses tRNA(Ile) + L-isoleucine + ATP = L-isoleucyl-tRNA(Ile) + AMP + diphosphate. Catalyzes the attachment of isoleucine to tRNA(Ile). As IleRS can inadvertently accommodate and process structurally similar amino acids such as valine, to avoid such errors it has two additional distinct tRNA(Ile)-dependent editing activities. One activity is designated as 'pretransfer' editing and involves the hydrolysis of activated Val-AMP. The other activity is designated 'posttransfer' editing and involves deacylation of mischarged Val-tRNA(Ile). The protein is Isoleucine--tRNA ligase of Acholeplasma laidlawii (strain PG-8A).